Here is a 149-residue protein sequence, read N- to C-terminus: 3-dehydroquinate dehydratase (149 aa).

Y26 functions as the Proton acceptor in the catalytic mechanism. Positions 77, 83, and 90 each coordinate substrate. H103 acts as the Proton donor in catalysis. Substrate is bound by residues 104 to 105 and R114; that span reads LS.

The protein belongs to the type-II 3-dehydroquinase family. As to quaternary structure, homododecamer.

The enzyme catalyses 3-dehydroquinate = 3-dehydroshikimate + H2O. It functions in the pathway metabolic intermediate biosynthesis; chorismate biosynthesis; chorismate from D-erythrose 4-phosphate and phosphoenolpyruvate: step 3/7. In terms of biological role, catalyzes a trans-dehydration via an enolate intermediate. This chain is 3-dehydroquinate dehydratase, found in Vibrio parahaemolyticus serotype O3:K6 (strain RIMD 2210633).